The sequence spans 374 residues: MFTRRAALVGAAALASAPLVIRTAGAEEAPAQLASAAPVDLSNLPRVKHTLVPPPFAHAHEQVAASGPVINEFEMRIIEKEVQLDEDAYLQAMTFDGSIPGPLMIVHEGDYVELTLINPPENTMPHNIDFHAATGALGGGGLTLINPGEKVVLRFKATRAGAFVYHCAPGGPMIPWHVVSGMAGCIMVLPRDGLKDHEGKPVRYDTVYYIGESDHYIPKDEDGTYMRFSDPSEGYEDMVAVMDTLIPSHIVFNGAVGALTGEGALKAKVGDNVLFVHSQPNRDSRPHLIGGHGDLVWETGKFHNAPERDLETWFIRGGSAGAALYKFLQPGVYAYVNHNLIEAVHKGATAHVLVEGEWDNDLMEQVVAPVGLTG.

The segment at residues 1-31 is a signal peptide (tat-type signal); sequence MFTRRAALVGAAALASAPLVIRTAGAEEAPA. Plastocyanin-like domains are found at residues 93–189 and 254–355; these read MTFD…IMVL and GAVG…VLVE. Residues His-126, His-131, His-166, Cys-167, His-177, Met-182, and His-338 each coordinate Cu cation.

Belongs to the multicopper oxidase family. As to quaternary structure, homotrimer. Requires Cu(2+) as cofactor. The cofactor is Cu(+). It depends on FAD as a cofactor. Post-translationally, predicted to be exported by the Tat system. The position of the signal peptide cleavage has not been experimentally proven.

Its subcellular location is the periplasm. The enzyme catalyses nitric oxide + Fe(III)-[cytochrome c] + H2O = Fe(II)-[cytochrome c] + nitrite + 2 H(+). It functions in the pathway nitrogen metabolism; nitrate reduction (denitrification); dinitrogen from nitrate: step 2/4. The sequence is that of Copper-containing nitrite reductase (nirK) from Cereibacter sphaeroides (strain ATCC 17025 / ATH 2.4.3) (Rhodobacter sphaeroides).